A 202-amino-acid polypeptide reads, in one-letter code: Protein Thf1 (202 aa).

Residues 174 to 202 (IYKSSILKMEQAKELLQEAKIKDKKEKKK) adopt a coiled-coil conformation.

It belongs to the THF1 family.

Functionally, may be involved in photosynthetic membrane biogenesis. This Prochlorococcus marinus subsp. pastoris (strain CCMP1986 / NIES-2087 / MED4) protein is Protein Thf1.